The chain runs to 931 residues: Probable zinc protease PqqL (931 aa).

H80 is a Zn(2+) binding site. E83 serves as the catalytic Proton acceptor. Residues H84 and E160 each contribute to the Zn(2+) site.

It belongs to the peptidase M16 family. Zn(2+) serves as cofactor.

The polypeptide is Probable zinc protease PqqL (pqqL) (Escherichia coli (strain K12)).